A 690-amino-acid polypeptide reads, in one-letter code: Methionine--tRNA ligase (690 aa).

Positions 20–30 match the 'HIGH' region motif; sequence PYANGSIHLGH. Zn(2+) contacts are provided by Cys151, Cys154, Cys164, and Cys167. The short motif at 337-341 is the 'KMSKS' region element; the sequence is KMSKS. ATP is bound at residue Lys340. The tRNA-binding domain occupies 589–690; the sequence is DFAKVDLRIA…EGAQPGMRVM (102 aa).

Belongs to the class-I aminoacyl-tRNA synthetase family. MetG type 1 subfamily. In terms of assembly, homodimer. The cofactor is Zn(2+).

The protein localises to the cytoplasm. It catalyses the reaction tRNA(Met) + L-methionine + ATP = L-methionyl-tRNA(Met) + AMP + diphosphate. Functionally, is required not only for elongation of protein synthesis but also for the initiation of all mRNA translation through initiator tRNA(fMet) aminoacylation. The sequence is that of Methionine--tRNA ligase from Vibrio vulnificus (strain YJ016).